The primary structure comprises 630 residues: DNA mismatch repair protein MutL (630 aa).

2 disordered regions span residues 361 to 386 and 407 to 431; these read VLSSDIGGGEDATAPLAPLTGDAPAE and FERKQEEEVGEERCSPRLPTDGQAE. The span at 407 to 421 shows a compositional bias: basic and acidic residues; that stretch reads FERKQEEEVGEERCS.

It belongs to the DNA mismatch repair MutL/HexB family.

Functionally, this protein is involved in the repair of mismatches in DNA. It is required for dam-dependent methyl-directed DNA mismatch repair. May act as a 'molecular matchmaker', a protein that promotes the formation of a stable complex between two or more DNA-binding proteins in an ATP-dependent manner without itself being part of a final effector complex. This Geobacillus kaustophilus (strain HTA426) protein is DNA mismatch repair protein MutL.